Reading from the N-terminus, the 705-residue chain is Translation initiation factor IF-2 (705 aa).

Residues 40 to 124 are disordered; that stretch reads DDQIKALDKK…QPAAPKEIPS (85 aa). Residues 41 to 58 show a composition bias toward basic and acidic residues; the sequence is DQIKALDKKFKKEQKNDN. Residues 59–77 are compositionally biased toward low complexity; it reads KQSTQNNHQKSNNQNQNKG. The span at 94 to 108 shows a compositional bias: basic residues; sequence KGNKKNNRNNKKNNK. The region spanning 207-376 is the tr-type G domain; the sequence is ERPAVVTIMG…GLVAEVQELK (170 aa). Positions 216–223 are G1; the sequence is GHVDHGKT. 216–223 lines the GTP pocket; the sequence is GHVDHGKT. A G2 region spans residues 241-245; that stretch reads GITQH. A G3 region spans residues 262 to 265; that stretch reads DTPG. GTP is bound by residues 262 to 266 and 316 to 319; these read DTPGH and NKID. Residues 316 to 319 are G4; the sequence is NKID. Residues 352–354 are G5; sequence SAL.

It belongs to the TRAFAC class translation factor GTPase superfamily. Classic translation factor GTPase family. IF-2 subfamily.

Its subcellular location is the cytoplasm. In terms of biological role, one of the essential components for the initiation of protein synthesis. Protects formylmethionyl-tRNA from spontaneous hydrolysis and promotes its binding to the 30S ribosomal subunits. Also involved in the hydrolysis of GTP during the formation of the 70S ribosomal complex. The protein is Translation initiation factor IF-2 of Staphylococcus aureus (strain USA300).